We begin with the raw amino-acid sequence, 673 residues long: MTNYLLEIGLEEIPAHLVTPSINQLAERMEAFLNENRLKFDKIIKFSTPRRLALIVEELSDSSEAIDEEVKGPSAKIAKDAEGNWSKAIQGFSRGQGATPDDLILKGDYYYAKKHVDGVKSEEILSKVGDEVIAKMTFSTYMKWGNNDFLFVRPIQWIVSLLEDEIVAFDLLDVTANRFSRGHRFLANVEIELKNANDYASKMPENFVLVDAEHRKAEISAQILALASENNWQVTLHKDLLEEVNNIVEYPTAFVGSFDPKYLSVPAEVLVTSMRDNQRYFEVYNQEGQLAPNFISVRNGNAEHIENVVLGNEKVLFARLEDAEFFWKEDQKLKIEDLVAKLAKVTFHAKIGSITEHMARTKLIAAKLADIAGLTDEEKVDVARSAEIYKFDLLTGMVGEFDELQGVMGEKYALLAGENANVAAAIREHYMPTSADGQLPETKVGSVLAAADKIDSVLSFFNVGLIPSGSNDPYALRRAVQGLIRIIEKMNWHFDLSLFIDQFEGQNHAEILEFVKARVQKLLLEKLDRYDIVEAAINSSNFDITNMMESAFVIDGHKLHEPFKPAIENVSRSINLVKKAADIAEINPALFEEDTEQALYDAVISLQNQWTYKPCEEKFRAIVHMLAPAIEAFFDNVMVMAEDLAVRDNRIALLSEVVALTSVMADFSLINTK.

Belongs to the class-II aminoacyl-tRNA synthetase family. As to quaternary structure, tetramer of two alpha and two beta subunits.

The protein resides in the cytoplasm. The enzyme catalyses tRNA(Gly) + glycine + ATP = glycyl-tRNA(Gly) + AMP + diphosphate. The chain is Glycine--tRNA ligase beta subunit from Lactococcus lactis subsp. cremoris (strain MG1363).